The sequence spans 501 residues: Proline--tRNA ligase (501 aa).

This sequence belongs to the class-II aminoacyl-tRNA synthetase family. ProS type 3 subfamily. As to quaternary structure, homodimer.

It is found in the cytoplasm. The catalysed reaction is tRNA(Pro) + L-proline + ATP = L-prolyl-tRNA(Pro) + AMP + diphosphate. Its function is as follows. Catalyzes the attachment of proline to tRNA(Pro) in a two-step reaction: proline is first activated by ATP to form Pro-AMP and then transferred to the acceptor end of tRNA(Pro). This chain is Proline--tRNA ligase, found in Halobacterium salinarum (strain ATCC 29341 / DSM 671 / R1).